Consider the following 610-residue polypeptide: Zinc metalloproteinase-disintegrin-like 4a (610 aa).

The N-terminal stretch at 1-20 (MIQVLLVTISLAVFPYQGSS) is a signal peptide. Residues 21–189 (VILESGNVND…KKASQSNLTP (169 aa)) constitute a propeptide that is removed on maturation. The Peptidase M12B domain occupies 199–395 (KYVKLFLVAD…NMPQCILKKP (197 aa)). A glycan (N-linked (GlcNAc...) asparagine) is linked at N218. D286 contacts Ca(2+). 3 cysteine pairs are disulfide-bonded: C310/C390, C350/C374, and C352/C357. A Zn(2+)-binding site is contributed by H335. E336 is a catalytic residue. H339 and H345 together coordinate Zn(2+). Ca(2+) contacts are provided by C390, V405, N408, F410, E412, E415, and D418. A Disintegrin domain is found at 403–488 (PAVCGNYFVE…AECTDSFQRN (86 aa)). 14 cysteine pairs are disulfide-bonded: C406–C435, C417–C430, C419–C425, C429–C452, C443–C449, C448–C474, C461–C481, C468–C499, C492–C504, C511–C561, C526–C572, C539–C549, C556–C598, and C592–C603. The short motif at 467-469 (ECD) is the D/ECD-tripeptide element.

It belongs to the venom metalloproteinase (M12B) family. P-III subfamily. Zn(2+) serves as cofactor. As to expression, expressed by the venom gland.

It localises to the secreted. Snake venom metalloproteinase that impairs hemostasis in the envenomed animal. This chain is Zinc metalloproteinase-disintegrin-like 4a, found in Crotalus adamanteus (Eastern diamondback rattlesnake).